Here is a 610-residue protein sequence, read N- to C-terminus: Protein Spindly-B (610 aa).

A coiled-coil region spans residues 1–392; it reads MEESETVLKL…IDKVKDELSL (392 aa). The tract at residues 474-610 is disordered; sequence TEAHGVSDAT…KPATAQCPQQ (137 aa). 2 stretches are compositionally biased toward basic and acidic residues: residues 493–511 and 535–548; these read SDDK…KDQD and RIME…DLNK. The segment covering 549 to 561 has biased composition (polar residues); sequence RNPNNCTITSIHP. The span at 570-583 shows a compositional bias: basic and acidic residues; the sequence is SELKKVDEEQEKRK.

This sequence belongs to the Spindly family.

Its subcellular location is the chromosome. It is found in the centromere. The protein localises to the kinetochore. Functionally, required for the localization of dynein and dynactin to the mitotic kintochore. Dynein is believed to control the initial lateral interaction between the kinetochore and spindle microtubules and to facilitate the subsequent formation of end-on kinetochore-microtubule attachments mediated by the NDC80 complex. In Xenopus laevis (African clawed frog), this protein is Protein Spindly-B (spdl1-b).